Here is a 542-residue protein sequence, read N- to C-terminus: CTP synthase (542 aa).

Positions 1–265 are amidoligase domain; it reads MTRYIFVTGG…DDFVVERFGL (265 aa). A CTP-binding site is contributed by serine 13. Serine 13 provides a ligand contact to UTP. ATP contacts are provided by residues 14 to 19 and aspartate 71; that span reads SLGKGI. Residues aspartate 71 and glutamate 139 each coordinate Mg(2+). Residues 146–148, 186–191, and lysine 222 each bind CTP; these read DIE and KTKPTQ. Residues 186–191 and lysine 222 each bind UTP; that span reads KTKPTQ. One can recognise a Glutamine amidotransferase type-1 domain in the interval 290-541; sequence TIAMVGKYME…VKAALAQKNK (252 aa). Glycine 351 serves as a coordination point for L-glutamine. Cysteine 378 (nucleophile; for glutamine hydrolysis) is an active-site residue. L-glutamine contacts are provided by residues 379-382, glutamate 402, and arginine 469; that span reads LGMQ. Residues histidine 514 and glutamate 516 contribute to the active site.

The protein belongs to the CTP synthase family. As to quaternary structure, homotetramer.

The enzyme catalyses UTP + L-glutamine + ATP + H2O = CTP + L-glutamate + ADP + phosphate + 2 H(+). The catalysed reaction is L-glutamine + H2O = L-glutamate + NH4(+). It carries out the reaction UTP + NH4(+) + ATP = CTP + ADP + phosphate + 2 H(+). It participates in pyrimidine metabolism; CTP biosynthesis via de novo pathway; CTP from UDP: step 2/2. Allosterically activated by GTP, when glutamine is the substrate; GTP has no effect on the reaction when ammonia is the substrate. The allosteric effector GTP functions by stabilizing the protein conformation that binds the tetrahedral intermediate(s) formed during glutamine hydrolysis. Inhibited by the product CTP, via allosteric rather than competitive inhibition. Catalyzes the ATP-dependent amination of UTP to CTP with either L-glutamine or ammonia as the source of nitrogen. Regulates intracellular CTP levels through interactions with the four ribonucleotide triphosphates. The chain is CTP synthase from Pseudomonas entomophila (strain L48).